The following is a 30-amino-acid chain: Conotoxin TVIIA (30 aa).

3 disulfides stabilise this stretch: C2–C14, C9–C19, and C13–C24. 2 positions are modified to 4-hydroxyproline: P10 and P11.

Post-translationally, three different forms of TVIIA exist. Pro-10 and Pro-11 of conotoxin TVIIA are hydroxylated in TVIIA, whereas Pro-10 is not hydroxylated in [Pro10]TVIIA and neither Pro-10 nor Pro-11 are hydroxylated in [Pro10,11]TVIIA. As to expression, expressed by the venom duct.

The protein localises to the secreted. Its function is as follows. By structural similarity with conotoxin GS, may inhibit the sodium channel (Nav). No effect was observed upon intracranial injections into mice and intraperitoneal injections into goldfish (25 ug). The sequence is that of Conotoxin TVIIA from Conus tulipa (Fish-hunting cone snail).